We begin with the raw amino-acid sequence, 374 residues long: Carbamoyl phosphate synthase small chain (374 aa).

The tract at residues 1–186 (MTEPAILVLE…DRNEWKRAAP (186 aa)) is CPSase. L-glutamine is bound by residues serine 47, glycine 237, and glycine 239. The 186-residue stretch at 189–374 (KVVAYDYGVK…RFITMMAAQS (186 aa)) folds into the Glutamine amidotransferase type-1 domain. Cysteine 265 functions as the Nucleophile in the catalytic mechanism. L-glutamine is bound by residues leucine 266, glutamine 269, asparagine 307, glycine 309, and phenylalanine 310. Active-site residues include histidine 349 and glutamate 351.

It belongs to the CarA family. Composed of two chains; the small (or glutamine) chain promotes the hydrolysis of glutamine to ammonia, which is used by the large (or ammonia) chain to synthesize carbamoyl phosphate. Tetramer of heterodimers (alpha,beta)4.

It catalyses the reaction hydrogencarbonate + L-glutamine + 2 ATP + H2O = carbamoyl phosphate + L-glutamate + 2 ADP + phosphate + 2 H(+). The enzyme catalyses L-glutamine + H2O = L-glutamate + NH4(+). It functions in the pathway amino-acid biosynthesis; L-arginine biosynthesis; carbamoyl phosphate from bicarbonate: step 1/1. It participates in pyrimidine metabolism; UMP biosynthesis via de novo pathway; (S)-dihydroorotate from bicarbonate: step 1/3. In terms of biological role, small subunit of the glutamine-dependent carbamoyl phosphate synthetase (CPSase). CPSase catalyzes the formation of carbamoyl phosphate from the ammonia moiety of glutamine, carbonate, and phosphate donated by ATP, constituting the first step of 2 biosynthetic pathways, one leading to arginine and/or urea and the other to pyrimidine nucleotides. The small subunit (glutamine amidotransferase) binds and cleaves glutamine to supply the large subunit with the substrate ammonia. The polypeptide is Carbamoyl phosphate synthase small chain (Xylella fastidiosa (strain 9a5c)).